The following is a 354-amino-acid chain: 4-hydroxy-2-oxovalerate aldolase 5 (354 aa).

One can recognise a Pyruvate carboxyltransferase domain in the interval 11–263 (VTVHDMCLRD…ETGCDLFKLM (253 aa)). 19–20 (RD) is a binding site for substrate. D20 lines the Mn(2+) pocket. H23 (proton acceptor) is an active-site residue. The substrate site is built by S173 and H202. 2 residues coordinate Mn(2+): H202 and H204. Residue Y293 participates in substrate binding.

This sequence belongs to the 4-hydroxy-2-oxovalerate aldolase family.

The catalysed reaction is (S)-4-hydroxy-2-oxopentanoate = acetaldehyde + pyruvate. This Dechloromonas aromatica (strain RCB) protein is 4-hydroxy-2-oxovalerate aldolase 5.